Consider the following 295-residue polypeptide: Indole-3-glycerol phosphate synthase (295 aa).

This sequence belongs to the TrpC family.

It carries out the reaction 1-(2-carboxyphenylamino)-1-deoxy-D-ribulose 5-phosphate + H(+) = (1S,2R)-1-C-(indol-3-yl)glycerol 3-phosphate + CO2 + H2O. The protein operates within amino-acid biosynthesis; L-tryptophan biosynthesis; L-tryptophan from chorismate: step 4/5. The polypeptide is Indole-3-glycerol phosphate synthase (Prochlorococcus marinus subsp. pastoris (strain CCMP1986 / NIES-2087 / MED4)).